The following is a 252-amino-acid chain: 5'-nucleotidase SurE (252 aa).

Residues D8, D9, S40, and N92 each contribute to the a divalent metal cation site.

This sequence belongs to the SurE nucleotidase family. A divalent metal cation serves as cofactor.

The protein localises to the cytoplasm. The enzyme catalyses a ribonucleoside 5'-phosphate + H2O = a ribonucleoside + phosphate. Nucleotidase that shows phosphatase activity on nucleoside 5'-monophosphates. This Mesorhizobium japonicum (strain LMG 29417 / CECT 9101 / MAFF 303099) (Mesorhizobium loti (strain MAFF 303099)) protein is 5'-nucleotidase SurE.